The sequence spans 244 residues: 1-(5-phosphoribosyl)-5-[(5-phosphoribosylamino)methylideneamino] imidazole-4-carboxamide isomerase (244 aa).

The active-site Proton acceptor is the aspartate 8. Aspartate 131 (proton donor) is an active-site residue.

The protein belongs to the HisA/HisF family.

The protein localises to the cytoplasm. It carries out the reaction 1-(5-phospho-beta-D-ribosyl)-5-[(5-phospho-beta-D-ribosylamino)methylideneamino]imidazole-4-carboxamide = 5-[(5-phospho-1-deoxy-D-ribulos-1-ylimino)methylamino]-1-(5-phospho-beta-D-ribosyl)imidazole-4-carboxamide. Its pathway is amino-acid biosynthesis; L-histidine biosynthesis; L-histidine from 5-phospho-alpha-D-ribose 1-diphosphate: step 4/9. This chain is 1-(5-phosphoribosyl)-5-[(5-phosphoribosylamino)methylideneamino] imidazole-4-carboxamide isomerase, found in Thermomicrobium roseum (strain ATCC 27502 / DSM 5159 / P-2).